A 129-amino-acid polypeptide reads, in one-letter code: DNA-directed RNA polymerase subunit omega (129 aa).

Residues 77 to 98 (VDEPESEVVPALSSAPQNPEAI) are disordered.

The protein belongs to the RNA polymerase subunit omega family. As to quaternary structure, the RNAP catalytic core consists of 2 alpha, 1 beta, 1 beta' and 1 omega subunit. When a sigma factor is associated with the core the holoenzyme is formed, which can initiate transcription.

It carries out the reaction RNA(n) + a ribonucleoside 5'-triphosphate = RNA(n+1) + diphosphate. Its function is as follows. Promotes RNA polymerase assembly. Latches the N- and C-terminal regions of the beta' subunit thereby facilitating its interaction with the beta and alpha subunits. The sequence is that of DNA-directed RNA polymerase subunit omega from Methylocella silvestris (strain DSM 15510 / CIP 108128 / LMG 27833 / NCIMB 13906 / BL2).